A 61-amino-acid polypeptide reads, in one-letter code: Large ribosomal subunit protein uL30 (61 aa).

The protein belongs to the universal ribosomal protein uL30 family. As to quaternary structure, part of the 50S ribosomal subunit.

The polypeptide is Large ribosomal subunit protein uL30 (Methylococcus capsulatus (strain ATCC 33009 / NCIMB 11132 / Bath)).